Here is a 481-residue protein sequence, read N- to C-terminus: 3-isopropylmalate dehydratase large subunit (481 aa).

3 residues coordinate [4Fe-4S] cluster: Cys363, Cys423, and Cys426. The disordered stretch occupies residues 437–463 (GQRAASTSNRNFEGRQGRGGRTHLVSP).

The protein belongs to the aconitase/IPM isomerase family. LeuC type 1 subfamily. In terms of assembly, heterodimer of LeuC and LeuD. The cofactor is [4Fe-4S] cluster.

It carries out the reaction (2R,3S)-3-isopropylmalate = (2S)-2-isopropylmalate. Its pathway is amino-acid biosynthesis; L-leucine biosynthesis; L-leucine from 3-methyl-2-oxobutanoate: step 2/4. Catalyzes the isomerization between 2-isopropylmalate and 3-isopropylmalate, via the formation of 2-isopropylmaleate. The protein is 3-isopropylmalate dehydratase large subunit of Salinispora arenicola (strain CNS-205).